The primary structure comprises 436 residues: Probable cinnamyl alcohol dehydrogenase 8B (436 aa).

C120 serves as a coordination point for Zn(2+). An NADP(+)-binding site is contributed by T122. Zn(2+) is bound by residues H142, E143, C173, C176, C179, C187, and C236. NADP(+)-binding positions include T240, 261-266, 284-289, T324, G348, and 371-373; these read GLGGLG, STSPGK, and NCV.

The protein belongs to the zinc-containing alcohol dehydrogenase family. In terms of assembly, homodimer. The cofactor is Zn(2+).

The enzyme catalyses (E)-cinnamyl alcohol + NADP(+) = (E)-cinnamaldehyde + NADPH + H(+). The catalysed reaction is (E)-coniferol + NADP(+) = (E)-coniferaldehyde + NADPH + H(+). It catalyses the reaction (E)-sinapyl alcohol + NADP(+) = (E)-sinapaldehyde + NADPH + H(+). It carries out the reaction (E)-4-coumaroyl alcohol + NADP(+) = (E)-4-coumaraldehyde + NADPH + H(+). The enzyme catalyses (E)-caffeyl alcohol + NADP(+) = (E)-caffeyl aldehyde + NADPH + H(+). It participates in aromatic compound metabolism; phenylpropanoid biosynthesis. In terms of biological role, involved in lignin biosynthesis. Catalyzes the final step specific for the production of lignin monomers. Catalyzes the NADPH-dependent reduction of coniferaldehyde, 5-hydroxyconiferaldehyde, sinapaldehyde, 4-coumaraldehyde and caffeyl aldehyde to their respective alcohols. In Oryza sativa subsp. japonica (Rice), this protein is Probable cinnamyl alcohol dehydrogenase 8B.